A 351-amino-acid chain; its full sequence is Phosphate acyltransferase (351 aa).

The protein belongs to the PlsX family. Homodimer. Probably interacts with PlsY.

It localises to the cytoplasm. The enzyme catalyses a fatty acyl-[ACP] + phosphate = an acyl phosphate + holo-[ACP]. It functions in the pathway lipid metabolism; phospholipid metabolism. Catalyzes the reversible formation of acyl-phosphate (acyl-PO(4)) from acyl-[acyl-carrier-protein] (acyl-ACP). This enzyme utilizes acyl-ACP as fatty acyl donor, but not acyl-CoA. This is Phosphate acyltransferase from Neisseria meningitidis serogroup B (strain ATCC BAA-335 / MC58).